The primary structure comprises 150 residues: MQIWVDADACPKVIKEILYRAAERTGVLLTLVANQPLFPPRSLWIKTLQVPPGFDVADNEIVRRLATGDLVVTADIPLAAEVIACGGHALNPRGEFYSTENIRELLNLRDFMDTLRSSGVQTGGPAALTQADRQVFANRLDQFLARIVSD.

Belongs to the UPF0178 family.

The polypeptide is UPF0178 protein AZOSEA36080 (Aromatoleum aromaticum (strain DSM 19018 / LMG 30748 / EbN1) (Azoarcus sp. (strain EbN1))).